Reading from the N-terminus, the 245-residue chain is Acetoacetate decarboxylase (245 aa).

The Schiff-base intermediate with acetoacetate role is filled by Lys-116.

This sequence belongs to the ADC family.

The catalysed reaction is acetoacetate + H(+) = acetone + CO2. In terms of biological role, catalyzes the conversion of acetoacetate to acetone and carbon dioxide. This Acidiphilium cryptum (strain JF-5) protein is Acetoacetate decarboxylase.